The sequence spans 508 residues: Glycogen synthase (508 aa).

An ADP-alpha-D-glucose-binding site is contributed by Lys-27.

Belongs to the glycosyltransferase 1 family. Bacterial/plant glycogen synthase subfamily.

It carries out the reaction [(1-&gt;4)-alpha-D-glucosyl](n) + ADP-alpha-D-glucose = [(1-&gt;4)-alpha-D-glucosyl](n+1) + ADP + H(+). It participates in glycan biosynthesis; glycogen biosynthesis. In terms of biological role, synthesizes alpha-1,4-glucan chains using ADP-glucose. This chain is Glycogen synthase, found in Photobacterium profundum (strain SS9).